The following is a 72-amino-acid chain: Beta-defensin 104A (72 aa).

Residues 1–22 (MRRLVLLLAISLLLYQDLPVRS) form the signal peptide. Intrachain disulfides connect cysteine 30–cysteine 57, cysteine 37–cysteine 51, and cysteine 41–cysteine 58.

The protein belongs to the beta-defensin family.

The protein localises to the secreted. In terms of biological role, has antimicrobial activity. This is Beta-defensin 104A (DEFB104A) from Pongo pygmaeus (Bornean orangutan).